We begin with the raw amino-acid sequence, 96 residues long: Citrate lyase acyl carrier protein (96 aa).

Position 14 is an O-(phosphoribosyl dephospho-coenzyme A)serine (serine 14).

This sequence belongs to the CitD family. Oligomer with a subunit composition of (alpha,beta,gamma)6.

It localises to the cytoplasm. Functionally, covalent carrier of the coenzyme of citrate lyase. This chain is Citrate lyase acyl carrier protein, found in Pectobacterium atrosepticum (strain SCRI 1043 / ATCC BAA-672) (Erwinia carotovora subsp. atroseptica).